Here is a 254-residue protein sequence, read N- to C-terminus: Ubiquinone/menaquinone biosynthesis C-methyltransferase UbiE (254 aa).

S-adenosyl-L-methionine is bound by residues Thr77, Asp98, 126 to 127 (NA), and Ser143.

Belongs to the class I-like SAM-binding methyltransferase superfamily. MenG/UbiE family.

The catalysed reaction is a 2-demethylmenaquinol + S-adenosyl-L-methionine = a menaquinol + S-adenosyl-L-homocysteine + H(+). It carries out the reaction a 2-methoxy-6-(all-trans-polyprenyl)benzene-1,4-diol + S-adenosyl-L-methionine = a 5-methoxy-2-methyl-3-(all-trans-polyprenyl)benzene-1,4-diol + S-adenosyl-L-homocysteine + H(+). It participates in quinol/quinone metabolism; menaquinone biosynthesis; menaquinol from 1,4-dihydroxy-2-naphthoate: step 2/2. Its pathway is cofactor biosynthesis; ubiquinone biosynthesis. Methyltransferase required for the conversion of demethylmenaquinol (DMKH2) to menaquinol (MKH2) and the conversion of 2-polyprenyl-6-methoxy-1,4-benzoquinol (DDMQH2) to 2-polyprenyl-3-methyl-6-methoxy-1,4-benzoquinol (DMQH2). The chain is Ubiquinone/menaquinone biosynthesis C-methyltransferase UbiE from Hydrogenovibrio crunogenus (strain DSM 25203 / XCL-2) (Thiomicrospira crunogena).